A 316-amino-acid polypeptide reads, in one-letter code: Transaldolase (316 aa).

K125 serves as the catalytic Schiff-base intermediate with substrate.

It belongs to the transaldolase family. Type 1 subfamily. In terms of assembly, homodimer.

It localises to the cytoplasm. The catalysed reaction is D-sedoheptulose 7-phosphate + D-glyceraldehyde 3-phosphate = D-erythrose 4-phosphate + beta-D-fructose 6-phosphate. Its pathway is carbohydrate degradation; pentose phosphate pathway; D-glyceraldehyde 3-phosphate and beta-D-fructose 6-phosphate from D-ribose 5-phosphate and D-xylulose 5-phosphate (non-oxidative stage): step 2/3. In terms of biological role, transaldolase is important for the balance of metabolites in the pentose-phosphate pathway. This Verminephrobacter eiseniae (strain EF01-2) protein is Transaldolase.